We begin with the raw amino-acid sequence, 213 residues long: Small ribosomal subunit protein uS4 (213 aa).

Residues 16-53 form a disordered region; the sequence is GTDLGLKSGVKPYDVKTKKSARPPGQHGVSRNKSSEYS. Over residues 44 to 53 the composition is skewed to polar residues; the sequence is VSRNKSSEYS. Residues 97 to 163 form the S4 RNA-binding domain; the sequence is SRLDNVVYRM…EKSREQLRIK (67 aa).

The protein belongs to the universal ribosomal protein uS4 family. In terms of assembly, part of the 30S ribosomal subunit. Contacts protein S5. The interaction surface between S4 and S5 is involved in control of translational fidelity.

Its function is as follows. One of the primary rRNA binding proteins, it binds directly to 16S rRNA where it nucleates assembly of the body of the 30S subunit. With S5 and S12 plays an important role in translational accuracy. The sequence is that of Small ribosomal subunit protein uS4 from Psychrobacter cryohalolentis (strain ATCC BAA-1226 / DSM 17306 / VKM B-2378 / K5).